The sequence spans 728 residues: 1,4-alpha-glucan branching enzyme GlgB (728 aa).

Catalysis depends on Asp405, which acts as the Nucleophile. Glu458 serves as the catalytic Proton donor.

This sequence belongs to the glycosyl hydrolase 13 family. GlgB subfamily. In terms of assembly, monomer.

It catalyses the reaction Transfers a segment of a (1-&gt;4)-alpha-D-glucan chain to a primary hydroxy group in a similar glucan chain.. Its pathway is glycan biosynthesis; glycogen biosynthesis. Its function is as follows. Catalyzes the formation of the alpha-1,6-glucosidic linkages in glycogen by scission of a 1,4-alpha-linked oligosaccharide from growing alpha-1,4-glucan chains and the subsequent attachment of the oligosaccharide to the alpha-1,6 position. This chain is 1,4-alpha-glucan branching enzyme GlgB, found in Salmonella paratyphi B (strain ATCC BAA-1250 / SPB7).